Here is a 423-residue protein sequence, read N- to C-terminus: tRNA(Ile2) 2-agmatinylcytidine synthetase TiaS (423 aa).

Positions 273–347 (VIVYGRVVEE…GINIEKIKIL (75 aa)) form a DNA-binding region, OB.

This sequence belongs to the TiaS family.

The protein localises to the cytoplasm. The catalysed reaction is cytidine(34) in tRNA(Ile2) + agmatine + ATP + H2O = 2-agmatinylcytidine(34) in tRNA(Ile2) + AMP + 2 phosphate + 2 H(+). In terms of biological role, ATP-dependent agmatine transferase that catalyzes the formation of 2-agmatinylcytidine (agm2C) at the wobble position (C34) of tRNA(Ile2), converting the codon specificity from AUG to AUA. The sequence is that of tRNA(Ile2) 2-agmatinylcytidine synthetase TiaS from Methanocaldococcus jannaschii (strain ATCC 43067 / DSM 2661 / JAL-1 / JCM 10045 / NBRC 100440) (Methanococcus jannaschii).